The following is a 768-amino-acid chain: Probable beta-glucosidase M (768 aa).

An N-terminal signal peptide occupies residues 1–19 (MHAIAGLTGFLAGVSLSYA). Asparagine 25, asparagine 72, and asparagine 259 each carry an N-linked (GlcNAc...) asparagine glycan. Aspartate 287 is a catalytic residue. N-linked (GlcNAc...) asparagine glycans are attached at residues asparagine 315, asparagine 322, asparagine 394, asparagine 434, asparagine 472, asparagine 543, and asparagine 651.

Belongs to the glycosyl hydrolase 3 family.

The protein localises to the secreted. The catalysed reaction is Hydrolysis of terminal, non-reducing beta-D-glucosyl residues with release of beta-D-glucose.. It functions in the pathway glycan metabolism; cellulose degradation. Its function is as follows. Beta-glucosidases are one of a number of cellulolytic enzymes involved in the degradation of cellulosic biomass. Catalyzes the last step releasing glucose from the inhibitory cellobiose. The polypeptide is Probable beta-glucosidase M (bglM) (Aspergillus flavus (strain ATCC 200026 / FGSC A1120 / IAM 13836 / NRRL 3357 / JCM 12722 / SRRC 167)).